The sequence spans 318 residues: Ribonuclease Z (318 aa).

Zn(2+) contacts are provided by histidine 62, histidine 64, aspartate 66, histidine 67, histidine 144, aspartate 215, and histidine 273. Aspartate 66 serves as the catalytic Proton acceptor.

Belongs to the RNase Z family. In terms of assembly, homodimer. Requires Zn(2+) as cofactor.

It carries out the reaction Endonucleolytic cleavage of RNA, removing extra 3' nucleotides from tRNA precursor, generating 3' termini of tRNAs. A 3'-hydroxy group is left at the tRNA terminus and a 5'-phosphoryl group is left at the trailer molecule.. Functionally, zinc phosphodiesterase, which displays some tRNA 3'-processing endonuclease activity. Probably involved in tRNA maturation, by removing a 3'-trailer from precursor tRNA. The protein is Ribonuclease Z of Prochlorococcus marinus (strain MIT 9303).